The sequence spans 353 residues: Phosphate acyltransferase (353 aa).

The protein belongs to the PlsX family. In terms of assembly, homodimer. Probably interacts with PlsY.

The protein localises to the cytoplasm. The catalysed reaction is a fatty acyl-[ACP] + phosphate = an acyl phosphate + holo-[ACP]. The protein operates within lipid metabolism; phospholipid metabolism. Functionally, catalyzes the reversible formation of acyl-phosphate (acyl-PO(4)) from acyl-[acyl-carrier-protein] (acyl-ACP). This enzyme utilizes acyl-ACP as fatty acyl donor, but not acyl-CoA. This Rhodopseudomonas palustris (strain HaA2) protein is Phosphate acyltransferase.